A 1100-amino-acid chain; its full sequence is DNA repair protein RAD1 (1100 aa).

Positions 1–47 (MSQLFYQGDSDDELQEELTRQTTQASQSSKIKNEDEPDDSNHLNEVE) are disordered. The segment covering 20–30 (RQTTQASQSSK) has biased composition (polar residues). A compositionally biased stretch (basic and acidic residues) spans 31 to 47 (IKNEDEPDDSNHLNEVE). Serine 613 is modified (phosphoserine). The ERCC4 domain occupies 821–901 (VVIVDTREFN…YPTLLIEFDE (81 aa)). The disordered stretch occupies residues 1063–1100 (EKEEQEQESTDENLESPGKTTDDNALHDHHNDVPEAPV). The segment covering 1065-1076 (EEQEQESTDENL) has biased composition (acidic residues). Position 1071 is a phosphoserine (serine 1071). Threonine 1072 carries the phosphothreonine modification. The span at 1082–1100 (TTDDNALHDHHNDVPEAPV) shows a compositional bias: basic and acidic residues.

The protein belongs to the XPF family. In terms of assembly, component of the nucleotide excision repair factor 1 (NEF1) complex consisting of RAD1, RAD10 and RAD14. Interacts with SAW1.

Its subcellular location is the nucleus. Involved in nucleotide excision repair of DNA damaged with UV light, bulky adducts, or cross-linking agents. Along with RAD10 forms an endonuclease that specifically degrades single-stranded DNA. The sequence is that of DNA repair protein RAD1 (RAD1) from Saccharomyces cerevisiae (strain ATCC 204508 / S288c) (Baker's yeast).